We begin with the raw amino-acid sequence, 1409 residues long: CRISPR-associated endonuclease Cas9 (1409 aa).

D31 serves as the catalytic For RuvC-like nuclease domain. 3 residues coordinate Mg(2+): D31, E784, and E788. The HNH Cas9-type domain maps to 792 to 949 (TNQGKSNSQQ…DKAGFIQRQL (158 aa)). H868 serves as the catalytic Proton acceptor for HNH nuclease domain. H1011 serves as a coordination point for Mg(2+). Residues 1121-1130 (EQNHGLDRGK) show a composition bias toward basic and acidic residues. Residues 1121–1151 (EQNHGLDRGKPKGLFNANLSSKPKPNSNENL) are disordered. The span at 1137 to 1150 (ANLSSKPKPNSNEN) shows a compositional bias: polar residues.

This sequence belongs to the CRISPR-associated protein Cas9 family. Subtype II-A subfamily. Monomer. Binds crRNA and tracrRNA. It depends on Mg(2+) as a cofactor.

Its activity is regulated as follows. Only has nuclease activity when bound to both gRNAs (crRNA plus tracrRNA). In terms of biological role, CRISPR (clustered regularly interspaced short palindromic repeat) is an adaptive immune system that provides protection against mobile genetic elements (viruses, transposable elements and conjugative plasmids). CRISPR clusters contain spacers, sequences complementary to antecedent mobile elements, and target invading nucleic acids. CRISPR clusters are transcribed and processed into CRISPR RNA (crRNA). In type II CRISPR systems correct processing of pre-crRNA requires a trans-encoded small RNA (tracrRNA), endogenous ribonuclease 3 (rnc) and Cas9. The tracrRNA serves as a guide for ribonuclease 3-aided processing of pre-crRNA. Cas9/crRNA/tracrRNA endonucleolytically cleaves linear or circular dsDNA target complementary to the spacer yielding blunt ends; Cas9 is inactive in the absence of the 2 guide RNAs (gRNA). Cas9 recognizes a 3'-G-rich protospacer adjacent motif (PAM, TGGTG in this organism) in the CRISPR repeat sequences to help distinguish self versus nonself, as targets within the bacterial CRISPR locus do not have PAMs. PAM recognition is also required for catalytic activity. When the CRISPR3/cas system consisting of cas9-cas1-cas2-csn2-CRISPR3 or just cas9-CRISPR3 is expressed in E.coli it prevents plasmids homologous to spacers 1 or 2 from transforming. The protein is CRISPR-associated endonuclease Cas9 of Streptococcus thermophilus.